A 642-amino-acid chain; its full sequence is Poly(A) polymerase beta (642 aa).

ATP-binding positions include 101-103 (FGS), Thr110, 114-116 (DID), Asp168, Lys229, Tyr238, and 247-248 (GV). The Mg(2+) site is built by Asp114, Asp116, and Asp168. 2 disordered regions span residues 530-553 (SENS…GNPQ) and 620-642 (LVNH…ILGV). Polar residues predominate over residues 620–636 (LVNHPSRPSGNTATNIP).

It belongs to the poly(A) polymerase family. Interacts with GSG1. Mg(2+) serves as cofactor. Requires Mn(2+) as cofactor. As to expression, testis specific.

The protein localises to the cytoplasm. It is found in the nucleus. It catalyses the reaction RNA(n) + ATP = RNA(n)-3'-adenine ribonucleotide + diphosphate. This is Poly(A) polymerase beta from Mus musculus (Mouse).